A 377-amino-acid chain; its full sequence is Cobalt-precorrin-5B C(1)-methyltransferase (377 aa).

The tract at residues 1–21 is disordered; that stretch reads MNPVRQPYDLAAPAPNGMRRG.

It belongs to the CbiD family.

The catalysed reaction is Co-precorrin-5B + S-adenosyl-L-methionine = Co-precorrin-6A + S-adenosyl-L-homocysteine. It functions in the pathway cofactor biosynthesis; adenosylcobalamin biosynthesis; cob(II)yrinate a,c-diamide from sirohydrochlorin (anaerobic route): step 6/10. Functionally, catalyzes the methylation of C-1 in cobalt-precorrin-5B to form cobalt-precorrin-6A. This Chromobacterium violaceum (strain ATCC 12472 / DSM 30191 / JCM 1249 / CCUG 213 / NBRC 12614 / NCIMB 9131 / NCTC 9757 / MK) protein is Cobalt-precorrin-5B C(1)-methyltransferase.